A 349-amino-acid chain; its full sequence is Acyl-CoA:acyl-CoA alkyltransferase (349 aa).

The Proton acceptor role is filled by Glu97. Cys123 functions as the Acyl-thioester intermediate in the catalytic mechanism.

Belongs to the thiolase-like superfamily. OleA family.

The enzyme catalyses a 1,2-saturated acyl-CoA + an acyl-CoA + H2O = an (R)-2-alkyl-3-oxoalkanoate + 2 CoA + H(+). Its function is as follows. Involved in olefin biosynthesis. Catalyzes a non-decarboxylative head-to-head Claisen condensation of two acyl-CoA molecules, generating an (R)-2-alkyl-3-oxoalkanoate. The S.oneidensis oleABCD genes produce 3,6,9,12,15,19,22,25,28-hentriacontanonaene, which may aid the cells in adapting to a sudden drop in temperature. This chain is Acyl-CoA:acyl-CoA alkyltransferase, found in Shewanella oneidensis (strain ATCC 700550 / JCM 31522 / CIP 106686 / LMG 19005 / NCIMB 14063 / MR-1).